Here is a 237-residue protein sequence, read N- to C-terminus: DNA repair protein RecO (237 aa).

This sequence belongs to the RecO family.

Involved in DNA repair and RecF pathway recombination. This Rickettsia felis (strain ATCC VR-1525 / URRWXCal2) (Rickettsia azadi) protein is DNA repair protein RecO.